The sequence spans 214 residues: Probable transaldolase 1 (214 aa).

Catalysis depends on lysine 83, which acts as the Schiff-base intermediate with substrate.

The protein belongs to the transaldolase family. Type 3B subfamily.

It is found in the cytoplasm. It carries out the reaction D-sedoheptulose 7-phosphate + D-glyceraldehyde 3-phosphate = D-erythrose 4-phosphate + beta-D-fructose 6-phosphate. It functions in the pathway carbohydrate degradation; pentose phosphate pathway; D-glyceraldehyde 3-phosphate and beta-D-fructose 6-phosphate from D-ribose 5-phosphate and D-xylulose 5-phosphate (non-oxidative stage): step 2/3. Its function is as follows. Transaldolase is important for the balance of metabolites in the pentose-phosphate pathway. The protein is Probable transaldolase 1 of Listeria monocytogenes serotype 4b (strain F2365).